Consider the following 806-residue polypeptide: Leucine--tRNA ligase (806 aa).

The short motif at 38–48 is the 'HIGH' region element; the sequence is PYPSGEIHMGH. Residues 572-576 carry the 'KMSKS' region motif; sequence KMSKS. Lys575 is an ATP binding site.

This sequence belongs to the class-I aminoacyl-tRNA synthetase family.

It localises to the cytoplasm. The enzyme catalyses tRNA(Leu) + L-leucine + ATP = L-leucyl-tRNA(Leu) + AMP + diphosphate. The sequence is that of Leucine--tRNA ligase from Helicobacter pylori (strain ATCC 700392 / 26695) (Campylobacter pylori).